An 87-amino-acid polypeptide reads, in one-letter code: RNA-binding protein Hfq (87 aa).

The 60-residue stretch at 9–68 (DPFLNALRRERIPVSIYLVNGIKLQGQIESFDQFVILLKNTVNQMVYKHAISTVVPARPV) folds into the Sm domain. The disordered stretch occupies residues 65–87 (ARPVSHHSGDRPQGDRPQEKSED). The segment covering 71–87 (HSGDRPQGDRPQEKSED) has biased composition (basic and acidic residues).

This sequence belongs to the Hfq family. In terms of assembly, homohexamer.

In terms of biological role, RNA chaperone that binds small regulatory RNA (sRNAs) and mRNAs to facilitate mRNA translational regulation in response to envelope stress, environmental stress and changes in metabolite concentrations. Also binds with high specificity to tRNAs. The protein is RNA-binding protein Hfq of Vibrio parahaemolyticus serotype O3:K6 (strain RIMD 2210633).